A 289-amino-acid chain; its full sequence is tRNA pseudouridine synthase A (289 aa).

Asp-53 (nucleophile) is an active-site residue. A substrate-binding site is contributed by Tyr-119.

This sequence belongs to the tRNA pseudouridine synthase TruA family. Homodimer.

The catalysed reaction is uridine(38/39/40) in tRNA = pseudouridine(38/39/40) in tRNA. In terms of biological role, formation of pseudouridine at positions 38, 39 and 40 in the anticodon stem and loop of transfer RNAs. In Corynebacterium glutamicum (strain ATCC 13032 / DSM 20300 / JCM 1318 / BCRC 11384 / CCUG 27702 / LMG 3730 / NBRC 12168 / NCIMB 10025 / NRRL B-2784 / 534), this protein is tRNA pseudouridine synthase A.